Reading from the N-terminus, the 172-residue chain is Adenine phosphoribosyltransferase (172 aa).

This sequence belongs to the purine/pyrimidine phosphoribosyltransferase family. In terms of assembly, homodimer.

It localises to the cytoplasm. It carries out the reaction AMP + diphosphate = 5-phospho-alpha-D-ribose 1-diphosphate + adenine. It participates in purine metabolism; AMP biosynthesis via salvage pathway; AMP from adenine: step 1/1. Functionally, catalyzes a salvage reaction resulting in the formation of AMP, that is energically less costly than de novo synthesis. This is Adenine phosphoribosyltransferase from Synechococcus sp. (strain CC9605).